The primary structure comprises 225 residues: Ribonuclease HII (225 aa).

Positions 35-225 (GLVAGVDEVG…SFRPCQISPD (191 aa)) constitute an RNase H type-2 domain. Positions 41, 42, and 137 each coordinate a divalent metal cation.

The protein belongs to the RNase HII family. Mn(2+) serves as cofactor. Mg(2+) is required as a cofactor.

It localises to the cytoplasm. The enzyme catalyses Endonucleolytic cleavage to 5'-phosphomonoester.. Endonuclease that specifically degrades the RNA of RNA-DNA hybrids. The protein is Ribonuclease HII of Nostoc sp. (strain PCC 7120 / SAG 25.82 / UTEX 2576).